The following is a 195-amino-acid chain: MTPMLLSAFWTYTLITALTPGPNNILALSAATAHGFRQSIRVLAGMSLGFLVVMLLCAGIAFSLAVIDPAIIHLLSWVGAAYILWLAWKIATSPAADENARPKPVGFWVSFGLQFVNVKIILYGITALSTFVLPQTQALNWVIGVSILLALIGTFGNVCWALAGHLFQRAFRHYGRQLNIILALLLVYCAVRIFY.

Residues 1-9 are Periplasmic-facing; sequence MTPMLLSAF. The helical transmembrane segment at 10–32 threads the bilayer; sequence WTYTLITALTPGPNNILALSAAT. The Cytoplasmic segment spans residues 33 to 46; sequence AHGFRQSIRVLAGM. The helical transmembrane segment at 47-67 threads the bilayer; sequence SLGFLVVMLLCAGIAFSLAVI. Over 68 to 69 the chain is Periplasmic; the sequence is DP. A helical transmembrane segment spans residues 70–90; it reads AIIHLLSWVGAAYILWLAWKI. Residues 91–104 are Cytoplasmic-facing; that stretch reads ATSPAADENARPKP. The chain crosses the membrane as a helical span at residues 105-125; sequence VGFWVSFGLQFVNVKIILYGI. Residues 126–141 lie on the Periplasmic side of the membrane; sequence TALSTFVLPQTQALNW. The chain crosses the membrane as a helical span at residues 142–162; that stretch reads VIGVSILLALIGTFGNVCWAL. Residues 163-176 are Cytoplasmic-facing; the sequence is AGHLFQRAFRHYGR. A helical membrane pass occupies residues 177–194; that stretch reads QLNIILALLLVYCAVRIF. Y195 is a topological domain (periplasmic).

The protein belongs to the Rht family.

The protein resides in the cell inner membrane. It carries out the reaction O-acetyl-L-serine(in) = O-acetyl-L-serine(out). It catalyses the reaction L-cysteine(in) = L-cysteine(out). In terms of biological role, exporter of O-acetylserine (OAS) and cysteine. The sequence is that of Cysteine/O-acetylserine efflux protein (eamB) from Salmonella choleraesuis (strain SC-B67).